The chain runs to 532 residues: Intercellular adhesion molecule 1 (532 aa).

The first 27 residues, 1–27 (MAPSSPRPALPALLVLLGALFPGPGNA), serve as a signal peptide directing secretion. The Extracellular segment spans residues 28–480 (QTSVSPPKVI…TVNVLSPRYE (453 aa)). Ig-like C2-type domains follow at residues 41 to 103 (GGSV…QSTA) and 128 to 193 (GKDL…LDLR). Intrachain disulfides connect C48/C92, C52/C96, and C135/C186. N-linked (GlcNAc...) asparagine glycosylation occurs at N145. The Cell attachment site; atypical signature appears at 152–154 (RGE). 4 N-linked (GlcNAc...) asparagine glycosylation sites follow: N183, N202, N267, and N296. 2 consecutive Ig-like C2-type domains span residues 230-297 (DTQG…LGNQ) and 325-378 (GTEV…LEVA). C237 and C290 are joined by a disulfide. C332 and C371 form a disulfide bridge. N385 and N406 each carry an N-linked (GlcNAc...) asparagine glycan. 3 disulfide bridges follow: C403–C419, C419–C457, and C431–C457. The Ig-like C2-type 5 domain maps to 412–464 (NSQQTPMCQASGNPLPELKCLKDGTFPLPVGESVTVTRDLEGTYLCRARSTQG). A helical transmembrane segment spans residues 481 to 503 (IVIITVVAAAVIMGTAGLSTYLY). Residues 504–532 (NRQRKIRKYRLQQAQKGTPMKPNTQATPP) are Cytoplasmic-facing. Phosphothreonine is present on residues T521 and T530.

It belongs to the immunoglobulin superfamily. ICAM family. Homodimer. Interacts with MUC1 and promotes cell aggregation in epithelial cells. Interacts with ARHGEF26/SGEF. Interacts (on T cell side) with CD81, CD247 and CD9 at immunological synapses between antigen-presenting cells and T cells. Monoubiquitinated, which is promoted by MARCH9 and leads to endocytosis.

The protein resides in the membrane. In terms of biological role, ICAM proteins are ligands for the leukocyte adhesion protein LFA-1 (integrin alpha-L/beta-2). During leukocyte trans-endothelial migration, ICAM1 engagement promotes the assembly of endothelial apical cups through ARHGEF26/SGEF and RHOG activation. This chain is Intercellular adhesion molecule 1 (ICAM1), found in Pan troglodytes (Chimpanzee).